We begin with the raw amino-acid sequence, 359 residues long: Pyruvate dehydrogenase E1 component subunit beta, mitochondrial (359 aa).

Residues 1–30 (MAAVSGLVRRPLREVSGLLKRRFHWTAPAA) constitute a mitochondrion transit peptide. Phosphotyrosine is present on Y67. E89 is a binding site for thiamine diphosphate. K(+)-binding residues include I142, A190, I191, D193, and N195. An N6-acetyllysine modification is found at K354.

In terms of assembly, heterotetramer of two PDHA1 and two PDHB subunits. The heterotetramer interacts with DLAT, and is part of the multimeric pyruvate dehydrogenase complex that contains multiple copies of pyruvate dehydrogenase (E1), dihydrolipoamide acetyltransferase (DLAT, E2) and lipoamide dehydrogenase (DLD, E3). These subunits are bound to an inner core composed of about 48 DLAT and 12 PDHX molecules. Interacts with DLAT. Requires thiamine diphosphate as cofactor.

The protein resides in the mitochondrion matrix. The enzyme catalyses N(6)-[(R)-lipoyl]-L-lysyl-[protein] + pyruvate + H(+) = N(6)-[(R)-S(8)-acetyldihydrolipoyl]-L-lysyl-[protein] + CO2. In terms of biological role, the pyruvate dehydrogenase complex catalyzes the overall conversion of pyruvate to acetyl-CoA and CO(2), and thereby links the glycolytic pathway to the tricarboxylic cycle. The polypeptide is Pyruvate dehydrogenase E1 component subunit beta, mitochondrial (PDHB) (Homo sapiens (Human)).